The following is a 521-amino-acid chain: Protein YjiT (521 aa).

This chain is Protein YjiT (yjiT), found in Escherichia coli (strain K12).